A 361-amino-acid chain; its full sequence is Phenylalanine--tRNA ligase alpha subunit (361 aa).

Glu-260 is a Mg(2+) binding site.

It belongs to the class-II aminoacyl-tRNA synthetase family. Phe-tRNA synthetase alpha subunit type 1 subfamily. As to quaternary structure, tetramer of two alpha and two beta subunits. Mg(2+) serves as cofactor.

It localises to the cytoplasm. The enzyme catalyses tRNA(Phe) + L-phenylalanine + ATP = L-phenylalanyl-tRNA(Phe) + AMP + diphosphate + H(+). This Chelativorans sp. (strain BNC1) protein is Phenylalanine--tRNA ligase alpha subunit.